A 623-amino-acid polypeptide reads, in one-letter code: Envelope glycoprotein E (623 aa).

The first 30 residues, 1-30 (MGTVNKPVVGVLMGFGIITGTLRITNPVRA), serve as a signal peptide directing secretion. Residues 31–538 (SVLRYDDFHI…NPGTSPLLRY (508 aa)) are Virion surface-facing. Positions 208-236 (CTGDAAPAIQHICLKHTTCFQDVVVDVDC) are interaction with gI. N-linked (GlcNAc...) asparagine; by host glycosylation occurs at Asn-266. Residues 352–499 (SVGDTFSLAM…AYTVVSTVDH (148 aa)) are fc-binding. 3 cysteine pairs are disulfide-bonded: Cys-387-Cys-413, Cys-396-Cys-405, and Cys-432-Cys-442. A glycan (N-linked (GlcNAc...) asparagine; by host) is linked at Asn-437. Sulfotyrosine; by host is present on residues Tyr-438 and Tyr-441. The chain crosses the membrane as a helical span at residues 539 to 559 (AAWTGGLAAVVLLCLVIFLIC). Residues 560-623 (TAKRMRVKAY…SYTVYIDKTR (64 aa)) lie on the Intravirion side of the membrane. Positions 582–585 (YAGL) match the Internalization motif motif. The acidic stretch occupies residues 588–601 (DDFEDSESTDTEEE). Phosphoserine is present on residues Ser-593 and Ser-595. Thr-596 and Thr-598 each carry phosphothreonine.

The protein belongs to the alphaherpesvirinae glycoprotein E family. As to quaternary structure, interacts (via N-terminus) with host receptor IDE (via N-terminus). Interacts with gI; this interaction enhances the Fc receptor function of gE. The heterodimer gE/gI interacts with the Fc part of host IgG. In terms of processing, phosphorylated on serines within the acidic cluster. Phosphorylation determines whether endocytosed viral gE traffics to the trans-Golgi network or recycles to the cell membrane.

The protein resides in the virion membrane. It is found in the host cell membrane. Its subcellular location is the host cell junction. It localises to the host Golgi apparatus membrane. The protein localises to the host endosome membrane. Envelope glycoprotein that binds to the potential host cell entry receptor IDE. Functionally, in epithelial cells, the heterodimer gE/gI is required for the cell-to-cell spread of the virus, by sorting nascent virions to cell junctions. Once the virus reaches the cell junctions, virus particles can spread to adjacent cells extremely rapidly through interactions with cellular receptors that accumulate at these junctions. Implicated in basolateral spread in polarized cells. In neuronal cells, gE/gI is essential for the anterograde spread of the infection throughout the host nervous system. Together with US9, the heterodimer gE/gI is involved in the sorting and transport of viral structural components toward axon tips. In terms of biological role, the heterodimer gE/gI serves as a receptor for the Fc part of host IgG. Dissociation of gE/gI from IgG occurs at acidic pH. May thus be involved in anti-VZV antibodies bipolar bridging, followed by intracellular endocytosis and degradation, thereby interfering with host IgG-mediated immune responses. This is Envelope glycoprotein E (gE) from Homo sapiens (Human).